We begin with the raw amino-acid sequence, 185 residues long: Ribosome-recycling factor (185 aa).

Belongs to the RRF family.

Its subcellular location is the cytoplasm. Functionally, responsible for the release of ribosomes from messenger RNA at the termination of protein biosynthesis. May increase the efficiency of translation by recycling ribosomes from one round of translation to another. The sequence is that of Ribosome-recycling factor from Pseudomonas entomophila (strain L48).